The sequence spans 277 residues: Large ribosomal subunit protein uL2 (277 aa).

The segment at 223–277 is disordered; it reads VAMNPVDHPHGGGEGRTSTGRHPVTPWGKRTLGKKTRKRKASDKYIIRSRRARKR. A compositionally biased stretch (basic residues) spans 253–277; it reads TLGKKTRKRKASDKYIIRSRRARKR.

It belongs to the universal ribosomal protein uL2 family. In terms of assembly, part of the 50S ribosomal subunit. Forms a bridge to the 30S subunit in the 70S ribosome.

One of the primary rRNA binding proteins. Required for association of the 30S and 50S subunits to form the 70S ribosome, for tRNA binding and peptide bond formation. It has been suggested to have peptidyltransferase activity; this is somewhat controversial. Makes several contacts with the 16S rRNA in the 70S ribosome. The chain is Large ribosomal subunit protein uL2 from Halothermothrix orenii (strain H 168 / OCM 544 / DSM 9562).